The following is a 214-amino-acid chain: Thiamine-phosphate synthase (214 aa).

4-amino-2-methyl-5-(diphosphooxymethyl)pyrimidine is bound by residues 40 to 44 (QLREK) and Asn72. Residues Asp73 and Asp92 each contribute to the Mg(2+) site. Ser110 is a binding site for 4-amino-2-methyl-5-(diphosphooxymethyl)pyrimidine. Residue 137-139 (SPT) coordinates 2-[(2R,5Z)-2-carboxy-4-methylthiazol-5(2H)-ylidene]ethyl phosphate. Lys140 contributes to the 4-amino-2-methyl-5-(diphosphooxymethyl)pyrimidine binding site. Residues Gly167 and 185–186 (IS) each bind 2-[(2R,5Z)-2-carboxy-4-methylthiazol-5(2H)-ylidene]ethyl phosphate.

This sequence belongs to the thiamine-phosphate synthase family. Mg(2+) is required as a cofactor.

It carries out the reaction 2-[(2R,5Z)-2-carboxy-4-methylthiazol-5(2H)-ylidene]ethyl phosphate + 4-amino-2-methyl-5-(diphosphooxymethyl)pyrimidine + 2 H(+) = thiamine phosphate + CO2 + diphosphate. The enzyme catalyses 2-(2-carboxy-4-methylthiazol-5-yl)ethyl phosphate + 4-amino-2-methyl-5-(diphosphooxymethyl)pyrimidine + 2 H(+) = thiamine phosphate + CO2 + diphosphate. The catalysed reaction is 4-methyl-5-(2-phosphooxyethyl)-thiazole + 4-amino-2-methyl-5-(diphosphooxymethyl)pyrimidine + H(+) = thiamine phosphate + diphosphate. The protein operates within cofactor biosynthesis; thiamine diphosphate biosynthesis; thiamine phosphate from 4-amino-2-methyl-5-diphosphomethylpyrimidine and 4-methyl-5-(2-phosphoethyl)-thiazole: step 1/1. Condenses 4-methyl-5-(beta-hydroxyethyl)thiazole monophosphate (THZ-P) and 2-methyl-4-amino-5-hydroxymethyl pyrimidine pyrophosphate (HMP-PP) to form thiamine monophosphate (TMP). The protein is Thiamine-phosphate synthase of Wolinella succinogenes (strain ATCC 29543 / DSM 1740 / CCUG 13145 / JCM 31913 / LMG 7466 / NCTC 11488 / FDC 602W) (Vibrio succinogenes).